The following is a 610-amino-acid chain: UvrABC system protein C (610 aa).

The 79-residue stretch at 16-94 folds into the GIY-YIG domain; it reads SQPGVYRMYD…IKLYQPRYNV (79 aa). The region spanning 204-239 is the UVR domain; the sequence is DQVLTQLIARMEKASQNLEFEEAARIRDQIQAVRRV.

This sequence belongs to the UvrC family. In terms of assembly, interacts with UvrB in an incision complex.

It is found in the cytoplasm. The UvrABC repair system catalyzes the recognition and processing of DNA lesions. UvrC both incises the 5' and 3' sides of the lesion. The N-terminal half is responsible for the 3' incision and the C-terminal half is responsible for the 5' incision. The polypeptide is UvrABC system protein C (Escherichia fergusonii (strain ATCC 35469 / DSM 13698 / CCUG 18766 / IAM 14443 / JCM 21226 / LMG 7866 / NBRC 102419 / NCTC 12128 / CDC 0568-73)).